Here is a 526-residue protein sequence, read N- to C-terminus: MDIKNSPSNLNSPVSYNCSQSVLPLEPGPIYIPSSYVESCHEYSAMTFYSPAVVNYSISSNSEVGPGRQATSPNVLWPTPGHLSPLAIHCQPSLLYAEPQKSPWCDTRSLEHTLPVNRETLKRKASGSSCASPVTSPSSKRDAHFCAVCSDYASGYHYGVWSCEGCKAFFKRSIQGHNDYICPATNQCTIDKNRRKSCQACRLRKCYEVGMVKCGSRRERCGYRIVRKQRNSEGHLHCLSRAKKNGDHTTRVKELLLSTLSPEQLVLTLLEAEPPHVLVSRPSTPFTEASMMMSLTKLADKELVHMISWAKKIPGFMELSLYDQVRLLESCWLEVLMVGLMWRSIDHPGKLIFAPDLVLDRDEGKCVEGILEIFDMLLATTSRFRELKLQHKEYLCVKAMILLNSSMYPSAAAQEAESSRKLTHLLNAVTDALVWVIARSGISSQQQSVRLANLLMLLSHVRHASNKGTEHLLNMKCKNVVPVYDLLLEMLNAHTLRGNKSLVTGSERSRMEESESKEGSQKPQAQ.

Residues 1–145 are modulating; the sequence is MDIKNSPSNL…SPSSKRDAHF (145 aa). Ser84 and Ser102 each carry phosphoserine; by MAPK. 2 consecutive NR C4-type zinc fingers follow at residues 146–166 and 182–206; these read CAVC…CEGC and CPAT…LRKC. A DNA-binding region (nuclear receptor) is located at residues 146 to 211; the sequence is CAVCSDYASG…RLRKCYEVGM (66 aa). One can recognise an NR LBD domain in the interval 261–494; sequence SPEQLVLTLL…DLLLEMLNAH (234 aa). The disordered stretch occupies residues 502 to 526; sequence LVTGSERSRMEESESKEGSQKPQAQ. Residues 507–520 are compositionally biased toward basic and acidic residues; it reads ERSRMEESESKEGS.

Belongs to the nuclear hormone receptor family. NR3 subfamily. In terms of assembly, binds DNA as a homodimer. Can form a heterodimer with ESR1. Interacts with NCOA1, NCOA3, NCOA5 and NCOA6 coactivators, leading to a strong increase of transcription of target genes. Interacts with UBE1C and AKAP13. Interacts with DNTTIP2. Interacts with CCDC62 in the presence of estradiol/E2; this interaction seems to enhance the transcription of target genes. Interacts with DNAAF4. Interacts with PRMT2. Interacts with CCAR2 (via N-terminus) in a ligand-independent manner. Interacts with RBM39, in the presence of estradiol (E2). Interacts with STUB1/CHIP. In terms of processing, phosphorylation at Ser-84 and Ser-102 recruits NCOA1.

Its subcellular location is the nucleus. In terms of biological role, nuclear hormone receptor. Binds estrogens with an affinity similar to that of ESR1/ER-alpha, and activates expression of reporter genes containing estrogen response elements (ERE) in an estrogen-dependent manner. In Sus scrofa (Pig), this protein is Estrogen receptor beta (ESR2).